Here is a 434-residue protein sequence, read N- to C-terminus: Nicotinate phosphoribosyltransferase (434 aa).

Phosphohistidine; by autocatalysis is present on His-242.

It belongs to the NAPRTase family. Transiently phosphorylated on a His residue during the reaction cycle. Phosphorylation strongly increases the affinity for substrates and increases the rate of nicotinate D-ribonucleotide production. Dephosphorylation regenerates the low-affinity form of the enzyme, leading to product release.

The catalysed reaction is nicotinate + 5-phospho-alpha-D-ribose 1-diphosphate + ATP + H2O = nicotinate beta-D-ribonucleotide + ADP + phosphate + diphosphate. The protein operates within cofactor biosynthesis; NAD(+) biosynthesis; nicotinate D-ribonucleotide from nicotinate: step 1/1. Functionally, catalyzes the synthesis of beta-nicotinate D-ribonucleotide from nicotinate and 5-phospho-D-ribose 1-phosphate at the expense of ATP. The chain is Nicotinate phosphoribosyltransferase from Bradyrhizobium sp. (strain BTAi1 / ATCC BAA-1182).